The chain runs to 1228 residues: Clustered mitochondria protein homolog (1228 aa).

Residues P298–A557 enclose the Clu domain. The stretch at C486–E519 is one TPR 1 repeat. Residues L671–E702 adopt a coiled-coil conformation. TPR repeat units follow at residues A982–V1015 and A1108–E1141.

Belongs to the CLU family. As to quaternary structure, may associate with the eukaryotic translation initiation factor 3 (eIF-3) complex.

Its subcellular location is the cytoplasm. Functionally, mRNA-binding protein involved in proper cytoplasmic distribution of mitochondria. The protein is Clustered mitochondria protein homolog of Eremothecium gossypii (strain ATCC 10895 / CBS 109.51 / FGSC 9923 / NRRL Y-1056) (Yeast).